The following is a 132-amino-acid chain: Small ribosomal subunit protein uS8 (132 aa).

Belongs to the universal ribosomal protein uS8 family. As to quaternary structure, part of the 30S ribosomal subunit. Contacts proteins S5 and S12.

Functionally, one of the primary rRNA binding proteins, it binds directly to 16S rRNA central domain where it helps coordinate assembly of the platform of the 30S subunit. This is Small ribosomal subunit protein uS8 from Staphylococcus carnosus (strain TM300).